Reading from the N-terminus, the 525-residue chain is UPF0288 protein MA_3997 (525 aa).

It belongs to the UPF0288 family.

This Methanosarcina acetivorans (strain ATCC 35395 / DSM 2834 / JCM 12185 / C2A) protein is UPF0288 protein MA_3997.